Consider the following 134-residue polypeptide: STAG3-like protein 3 (134 aa).

Residues 10–95 enclose the SCD domain; it reads PKVTCRDVLP…GCFKDWMVSM (86 aa).

The protein belongs to the SCC3 family.

It is found in the nucleus. This Homo sapiens (Human) protein is STAG3-like protein 3 (STAG3L3).